A 284-amino-acid polypeptide reads, in one-letter code: Distal membrane arm assembly component 2 (284 aa).

It belongs to the ATP synthase subunit s family. In terms of assembly, associates with mitochondrial complex I assembly intermediates during its biogenesis.

In terms of biological role, involved in the assembly of the mitochondrial membrane respiratory chain NADH dehydrogenase (Complex I). This Drosophila melanogaster (Fruit fly) protein is Distal membrane arm assembly component 2.